Here is a 483-residue protein sequence, read N- to C-terminus: Glutamyl-tRNA(Gln) amidotransferase subunit A (483 aa).

Catalysis depends on charge relay system residues Lys-76 and Ser-151. Ser-175 (acyl-ester intermediate) is an active-site residue.

The protein belongs to the amidase family. GatA subfamily. As to quaternary structure, heterotrimer of A, B and C subunits.

The catalysed reaction is L-glutamyl-tRNA(Gln) + L-glutamine + ATP + H2O = L-glutaminyl-tRNA(Gln) + L-glutamate + ADP + phosphate + H(+). Its function is as follows. Allows the formation of correctly charged Gln-tRNA(Gln) through the transamidation of misacylated Glu-tRNA(Gln) in organisms which lack glutaminyl-tRNA synthetase. The reaction takes place in the presence of glutamine and ATP through an activated gamma-phospho-Glu-tRNA(Gln). The sequence is that of Glutamyl-tRNA(Gln) amidotransferase subunit A from Pseudomonas savastanoi pv. phaseolicola (strain 1448A / Race 6) (Pseudomonas syringae pv. phaseolicola (strain 1448A / Race 6)).